A 252-amino-acid chain; its full sequence is Triosephosphate isomerase (252 aa).

A substrate-binding site is contributed by 8-10 (NWK). Residue His-95 is the Electrophile of the active site. Glu-167 (proton acceptor) is an active-site residue. Substrate is bound by residues Gly-173, Ser-212, and 233–234 (GG).

It belongs to the triosephosphate isomerase family. In terms of assembly, homodimer.

It localises to the cytoplasm. It catalyses the reaction D-glyceraldehyde 3-phosphate = dihydroxyacetone phosphate. It functions in the pathway carbohydrate biosynthesis; gluconeogenesis. Its pathway is carbohydrate degradation; glycolysis; D-glyceraldehyde 3-phosphate from glycerone phosphate: step 1/1. In terms of biological role, involved in the gluconeogenesis. Catalyzes stereospecifically the conversion of dihydroxyacetone phosphate (DHAP) to D-glyceraldehyde-3-phosphate (G3P). The sequence is that of Triosephosphate isomerase from Lawsonia intracellularis (strain PHE/MN1-00).